Reading from the N-terminus, the 450-residue chain is Phosphoglucosamine mutase (450 aa).

The active-site Phosphoserine intermediate is the S102. Mg(2+)-binding residues include S102, D243, D245, and D247. Residue S102 is modified to Phosphoserine.

The protein belongs to the phosphohexose mutase family. Requires Mg(2+) as cofactor. Activated by phosphorylation.

It catalyses the reaction alpha-D-glucosamine 1-phosphate = D-glucosamine 6-phosphate. In terms of biological role, catalyzes the conversion of glucosamine-6-phosphate to glucosamine-1-phosphate. The chain is Phosphoglucosamine mutase from Rhizobium etli (strain ATCC 51251 / DSM 11541 / JCM 21823 / NBRC 15573 / CFN 42).